The chain runs to 430 residues: Histidine--tRNA ligase (430 aa).

The protein belongs to the class-II aminoacyl-tRNA synthetase family. Homodimer.

It is found in the cytoplasm. The catalysed reaction is tRNA(His) + L-histidine + ATP = L-histidyl-tRNA(His) + AMP + diphosphate + H(+). This Chlamydia abortus (strain DSM 27085 / S26/3) (Chlamydophila abortus) protein is Histidine--tRNA ligase.